A 482-amino-acid polypeptide reads, in one-letter code: UDP-N-acetylmuramate--L-alanine ligase (482 aa).

123 to 129 contacts ATP; that stretch reads GTHGKTT.

Belongs to the MurCDEF family.

It is found in the cytoplasm. The catalysed reaction is UDP-N-acetyl-alpha-D-muramate + L-alanine + ATP = UDP-N-acetyl-alpha-D-muramoyl-L-alanine + ADP + phosphate + H(+). Its pathway is cell wall biogenesis; peptidoglycan biosynthesis. Cell wall formation. In Pseudomonas entomophila (strain L48), this protein is UDP-N-acetylmuramate--L-alanine ligase.